A 495-amino-acid polypeptide reads, in one-letter code: Glycerol kinase (495 aa).

T11 is a binding site for ADP. Residues T11, T12, and S13 each contribute to the ATP site. Sn-glycerol 3-phosphate is bound at residue T11. ADP is bound at residue R15. Positions 81, 82, 133, and 242 each coordinate sn-glycerol 3-phosphate. 5 residues coordinate glycerol: R81, E82, Y133, D242, and Q243. ADP-binding residues include T264 and G307. Positions 264, 307, 311, and 408 each coordinate ATP. ADP-binding residues include G408 and N412.

This sequence belongs to the FGGY kinase family.

The catalysed reaction is glycerol + ATP = sn-glycerol 3-phosphate + ADP + H(+). It participates in polyol metabolism; glycerol degradation via glycerol kinase pathway; sn-glycerol 3-phosphate from glycerol: step 1/1. Its activity is regulated as follows. Inhibited by fructose 1,6-bisphosphate (FBP). Functionally, key enzyme in the regulation of glycerol uptake and metabolism. Catalyzes the phosphorylation of glycerol to yield sn-glycerol 3-phosphate. This chain is Glycerol kinase, found in Citrifermentans bemidjiense (strain ATCC BAA-1014 / DSM 16622 / JCM 12645 / Bem) (Geobacter bemidjiensis).